Consider the following 353-residue polypeptide: Histidinol-phosphate aminotransferase (353 aa).

K211 is subject to N6-(pyridoxal phosphate)lysine.

This sequence belongs to the class-II pyridoxal-phosphate-dependent aminotransferase family. Histidinol-phosphate aminotransferase subfamily. As to quaternary structure, homodimer. Pyridoxal 5'-phosphate is required as a cofactor.

The catalysed reaction is L-histidinol phosphate + 2-oxoglutarate = 3-(imidazol-4-yl)-2-oxopropyl phosphate + L-glutamate. Its pathway is amino-acid biosynthesis; L-histidine biosynthesis; L-histidine from 5-phospho-alpha-D-ribose 1-diphosphate: step 7/9. The protein is Histidinol-phosphate aminotransferase of Klebsiella pneumoniae (strain 342).